The following is a 336-amino-acid chain: Abasic site processing protein HMCES (336 aa).

Cys-2 acts as the Nucleophile in catalysis. The residue at position 2 (Cys-2) is a Thiazolidine linkage to a ring-opened DNA abasic site. Positions 26 to 51 are disordered; the sequence is RQKCPKWRDGDTDKYQPSYNKSPQSN. The span at 40 to 51 shows a compositional bias: polar residues; the sequence is YQPSYNKSPQSN. Glu-129 is a catalytic residue. The disordered stretch occupies residues 285-336; sequence QNKSPKKEESRSIIQSPKLSQFGAPPKKTSAGLMQQWLKKEDGEPSPKRAKK. Basic and acidic residues predominate over residues 322-336; that stretch reads LKKEDGEPSPKRAKK.

This sequence belongs to the SOS response-associated peptidase family. In terms of processing, ubiquitination of the hmces DNA-protein cross-link by rfwd3 may promotes its degradation.

Its subcellular location is the chromosome. With respect to regulation, formation and reversal of DNA-protein cross-link depends on DNA context. Catalyzes formation of the thiazolidine linkage in presence of abasic sites in single-stranded DNA. Mediates the reversal of the thiazolidine cross-link in presence of double stranded DNA. Sensor of abasic sites in single-stranded DNA (ssDNA) required to preserve genome integrity by promoting error-free repair of abasic sites. Acts as an enzyme that recognizes and binds abasic sites in ssDNA at replication forks and chemically modifies the lesion by forming a covalent cross-link with DNA: forms a stable thiazolidine linkage between a ring-opened abasic site and the alpha-amino and sulfhydryl substituents of its N-terminal catalytic cysteine residue. The hmces DNA-protein cross-link is then either reversed or degraded. Hmces is able to catalyze the reversal of its thiazolidine cross-link and cycle between a cross-link and a non-cross-linked state depending on DNA context: mediates self-reversal of the thiazolidine cross-link in double stranded DNA, allowing apex1 to initiate downstream repair of abasic sites. The hmces DNA-protein cross-link can also be degraded by the sprtn metalloprotease following unfolding by the brip1/fancj helicase. Promotes error-free repair of abasic sites by protecting abasic sites from translesion synthesis (TLS) polymerases and endonucleases that are error-prone and would generate mutations and double-strand breaks. Acts as a protease: mediates autocatalytic processing of its N-terminal methionine in order to expose the catalytic cysteine. The HMCES DNA-protein cross-link is then either reversed or degraded. According to a model, the HMCES DNA-protein cross-link. This Xenopus laevis (African clawed frog) protein is Abasic site processing protein HMCES.